The sequence spans 298 residues: Keratin-associated protein 10-11 (298 aa).

25 repeat units span residues 26-30 (CCEPP), 36-40 (CCAPA), 57-61 (CCQAA), 79-83 (CCQQS), 89-93 (CCTSS), 99-103 (CCVPV), 104-108 (CCKTV), 109-113 (CCKPV), 114-118 (CCVPV), 119-123 (CCGAA), 126-130 (CCRQS), 136-140 (CCASS), 146-150 (CCVPV), 151-155 (CCKPV), 156-160 (CCVST), 168-172 (CCQQS), 178-182 (CCTSS), 188-192 (CCVPV), 193-197 (CCKTV), 203-207 (CCVPV), 225-229 (CCTTS), 230-234 (CCRPS), 249-253 (CCVPV), 256-260 (CCAPT), and 267-271 (CCRPA). Residues 26–271 (CCEPPCSAPS…SCQSSCCRPA (246 aa)) form a 25 X 5 AA repeats of C-C-X(3) region.

The protein belongs to the KRTAP type 10 family. As to quaternary structure, interacts with hair keratins. As to expression, restricted to a narrow region of the hair fiber cuticle, lying approximately 20 cell layers above the apex of the dermal papilla of the hair root; not detected in any other tissues.

Functionally, in the hair cortex, hair keratin intermediate filaments are embedded in an interfilamentous matrix, consisting of hair keratin-associated proteins (KRTAP), which are essential for the formation of a rigid and resistant hair shaft through their extensive disulfide bond cross-linking with abundant cysteine residues of hair keratins. The matrix proteins include the high-sulfur and high-glycine-tyrosine keratins. The sequence is that of Keratin-associated protein 10-11 (KRTAP10-11) from Homo sapiens (Human).